Reading from the N-terminus, the 657-residue chain is MASARKASRPMRDVFGDFSDVSLEDSTMEEIRNFQISRNLTKIAPGHSRFLKRNQTLDEKHLLLKENPVLGSGPRLASCRPPTTASRIRANAALMKLAQLETRIMNRKLQRNLSDTESDSMTADAGLPKRADRILSGGALELASQNTDKTSQNQARELPVTENNAQNAKVSRFLKKKQAPVENISPEAPAGKERTLQTPKQKEPARTFDSPDSDEEEMKVLLGSLMDSSREKNTNQGFSSANVSEEEERKLFSVPSQLRAFTVPSVELSSAKPSQTSHLPTSLAADRTLHSTRSRADYPQSHVSSDTASHTPSVSITGAFSNSVSLKMGHVKLVSSPGRSEAETVDEPVSEGADDSLDEFRINILSLDGLAPAVSENSDLEQEEESAQRQKTAGKIFRAEASTGQDAPRQAQARSWASQGKAASAEGDESEVSEHLSASSASAIQQDSTSSMQPPSEAPMVNTVSSAYSEDFENSPSLTASEPTAHSKESLDRTLDALSESSSSVKTDLPQTAESRKKSGRHVTRVLVKDTAVQTPDPAFTYEWTKVASMAAMGPALGGAYVDPTPIANHVISADAIEALTAYSPAVLALHDVLKQQLSLTQQFIQASRHLHASLLRSLDADSFHYHTLEEAKEYIRCHRPAPLTMEDALEEVNKEL.

Phosphoserine is present on Ser114. 5 disordered regions span residues 142-216 (LASQ…SDEE), 228-248 (SSRE…EEEE), 291-312 (STRS…SHTP), 335-354 (SSPG…EGAD), and 399-522 (AEAS…SGRH). A compositionally biased stretch (polar residues) spans 143-169 (ASQNTDKTSQNQARELPVTENNAQNAK). The span at 190–206 (AGKERTLQTPKQKEPAR) shows a compositional bias: basic and acidic residues. Position 213 is a phosphoserine (Ser213). Polar residues-rich tracts occupy residues 234-243 (TNQGFSSANV) and 301-312 (SHVSSDTASHTP). Positions 343–354 (ETVDEPVSEGAD) are enriched in acidic residues. A compositionally biased stretch (low complexity) spans 437–451 (SASSASAIQQDSTSS). Positions 462 to 484 (NTVSSAYSEDFENSPSLTASEPT) are enriched in polar residues. Residues 485–495 (AHSKESLDRTL) show a composition bias toward basic and acidic residues. Positions 499–513 (SESSSSVKTDLPQTA) are enriched in polar residues.

This is an uncharacterized protein from Homo sapiens (Human).